The following is a 565-amino-acid chain: Alkaline nuclease (565 aa).

It belongs to the herpesviridae alkaline nuclease family. In terms of assembly, interacts with major DNA-binding protein; this interaction increases the nuclease processivity of the alkaline exonuclease.

The protein resides in the host nucleus. The protein localises to the host cytoplasm. In terms of biological role, plays a role in processing non linear or branched viral DNA intermediates in order to promote the production of mature packaged unit-length linear progeny viral DNA molecules. Exhibits endonuclease and exonuclease activities and accepts both double-stranded and single-stranded DNA as substrate. Exonuclease digestion of DNA is in the 5'-&gt; 3' direction and the products are 5'-monophosphate nucleosides. Additionally, forms a recombinase with the major DNA-binding protein, which displays strand exchange activity. The polypeptide is Alkaline nuclease (Equine herpesvirus 1 (strain V592) (EHV-1)).